The following is an 840-amino-acid chain: Phosphatidylinositol-3-phosphatase myotubularin-1 (840 aa).

A disordered region spans residues 1–28 (MTPPRPPSGRVRSLRDYSSESEKMDGTG). The span at 13-25 (SLRDYSSESEKMD) shows a compositional bias: basic and acidic residues. In terms of domain architecture, GRAM spans 45-112 (GSFSNLSCLL…ATIEKFNKMV (68 aa)). The Myotubularin phosphatase domain maps to 199-650 (GKSSIRASMD…LAPTLWPQFH (452 aa)). Residues 332 to 335 (NGAM), 357 to 358 (NI), 443 to 449 (CSDGWDR), and Arg-489 contribute to the substrate site. The Phosphocysteine intermediate role is filled by Cys-443. Residues 506–535 (QSSSAGSFPSSPVRQSSGSAASQSSSSSHG) form a disordered region. Over residues 507-535 (SSSAGSFPSSPVRQSSGSAASQSSSSSHG) the composition is skewed to low complexity. Residues 666-734 (VQCRAMTVKY…AALTRAVQSL (69 aa)) are a coiled coil. A disordered region spans residues 745-771 (VEDDPRSSLENNPRRRNRHGNNSDVSV).

It belongs to the protein-tyrosine phosphatase family. Non-receptor class myotubularin subfamily. As to expression, mostly expressed in siliques and leaves (including hydathodes), and, to a lower extent, in flowers and roots.

It is found in the cytoplasm. The protein localises to the endosome membrane. It carries out the reaction a 1,2-diacyl-sn-glycero-3-phospho-(1D-myo-inositol-3-phosphate) + H2O = a 1,2-diacyl-sn-glycero-3-phospho-(1D-myo-inositol) + phosphate. It catalyses the reaction a 1,2-diacyl-sn-glycero-3-phospho-(1D-myo-inositol-3,5-bisphosphate) + H2O = a 1,2-diacyl-sn-glycero-3-phospho-(1D-myo-inositol-5-phosphate) + phosphate. Functionally, phosphatase with phosphoinositide 3'-phosphatase activity that can use phosphatidylinositol-3-phosphate (PtdIns3P) and phosphatidylinositol-3,5-diphosphate (PtdIns3,5P(2)) as substrates and produces phosphatidylinositol-5-phosphate (PtdIns5P); participates in pathway(s) that transfer gene regulatory signals to the nucleus. Required for recovery after water deprivation, via the accumulation of PtdIns5P upon dehydration; high PtdIns5P levels mediate ATX1 cytoplasmic localization, thus down-regulating the expression of ATX1-dependent genes. Confers sensitivity to soil-water-deficit stress. The polypeptide is Phosphatidylinositol-3-phosphatase myotubularin-1 (MTM1) (Arabidopsis thaliana (Mouse-ear cress)).